The chain runs to 225 residues: Ureidoacrylate amidohydrolase RutB (225 aa).

Residue D22 is the Proton acceptor of the active site. K131 is a catalytic residue. The active-site Nucleophile is C164.

The protein belongs to the isochorismatase family. RutB subfamily.

The catalysed reaction is (Z)-3-ureidoacrylate + H2O + H(+) = (Z)-3-aminoacrylate + NH4(+) + CO2. It carries out the reaction (Z)-3-ureidoacrylate + H2O = (Z)-3-aminoacrylate + carbamate + H(+). It catalyses the reaction (Z)-2-methylureidoacrylate + H2O + H(+) = (Z)-2-methylaminoacrylate + NH4(+) + CO2. Hydrolyzes ureidoacrylate to form aminoacrylate and carbamate. The carbamate hydrolyzes spontaneously, thereby releasing one of the nitrogen atoms of the pyrimidine ring as ammonia and one of its carbon atoms as CO2. This Caulobacter vibrioides (strain ATCC 19089 / CIP 103742 / CB 15) (Caulobacter crescentus) protein is Ureidoacrylate amidohydrolase RutB.